Reading from the N-terminus, the 197-residue chain is MLQSSNSFARLLAELQKLPGVGEKTALRLAFHLLKYPENTAALAESLGEVLSRVKFCSVCFGITEEDPCRLCSSDRDETSLCVVEEPQDLLAVERTRAFRGRYHVLQGALSPLNGVTPDRLRIAELMRRLEEGTVREVVIATNFSVEGETTALYLARQIKPLGIRVTRLAHGIPLGSDLEYVDAATVQRALEGRSEL.

Residues 57–72 form a C4-type zinc finger; sequence CSVCFGITEEDPCRLC. The Toprim domain maps to 79-174; the sequence is TSLCVVEEPQ…RVTRLAHGIP (96 aa).

This sequence belongs to the RecR family.

In terms of biological role, may play a role in DNA repair. It seems to be involved in an RecBC-independent recombinational process of DNA repair. It may act with RecF and RecO. The protein is Recombination protein RecR of Geobacter metallireducens (strain ATCC 53774 / DSM 7210 / GS-15).